A 954-amino-acid polypeptide reads, in one-letter code: Mycolic acid-containing lipids exporter MmpL11 (954 aa).

The next 12 helical transmembrane spans lie at 11-31, 188-208, 214-234, 235-255, 279-299, 312-334, 373-393, 529-549, 559-579, 597-617, 648-668, and 670-690; these read FRWA…YLAL, IVLI…LPLV, VVVT…SVFV, TSTV…FILM, GLAV…IYLI, ILAV…ATFG, AIAA…MVLG, TQPL…LVSI, VLMT…VFQW, IPPL…IFLL, AALI…PLVA, and LGVA…LVLV.

Its subcellular location is the cell inner membrane. Contributes to cell wall biosynthesis and biofilm formation. Transports the mycolic acid-containing lipids monomeromycolyl diacylglycerol (MMDAG) and mycolate ester wax (WE) to the bacterial surface. The sequence is that of Mycolic acid-containing lipids exporter MmpL11 from Mycolicibacterium smegmatis (strain ATCC 700084 / mc(2)155) (Mycobacterium smegmatis).